We begin with the raw amino-acid sequence, 284 residues long: Elongation factor Ts (284 aa).

Residues 80 to 83 (TDFV) form an involved in Mg(2+) ion dislocation from EF-Tu region.

Belongs to the EF-Ts family.

The protein localises to the cytoplasm. In terms of biological role, associates with the EF-Tu.GDP complex and induces the exchange of GDP to GTP. It remains bound to the aminoacyl-tRNA.EF-Tu.GTP complex up to the GTP hydrolysis stage on the ribosome. The protein is Elongation factor Ts of Neisseria gonorrhoeae (strain ATCC 700825 / FA 1090).